We begin with the raw amino-acid sequence, 140 residues long: Odorant-binding protein 10 (140 aa).

The N-terminal stretch at 1-25 is a signal peptide; it reads MTSFRLANLTVFLVLLFCFMRGVHS.

It belongs to the PBP/GOBP family. In terms of tissue distribution, high-level expression in female mouth parts, particularly in the proboscis (at protein level). Low-level expression in female antenna (at protein level). Female salivary gland. Female chemosensory organs: antenna, palp and proboscis. Male antenna, wing and maxillary palp. Expressed at higher levels in male tissues compared to female tissues. Not detected in midgut.

Its subcellular location is the secreted. Its function is as follows. Involved in modulation of blood-feeding behavior and capacity in female mosquitoes. Required for normal oviposition. Required for normal fecundity and fertility of female mosquitoes. Required for normal expression of VGA1 gene, which encodes the egg yolk protein vitellogenin-A1. Required for normal female longevity when mosquitoes are maintained on regular sugar meal. Functionally, (Microbial infection) Facilitates shedding of dengue virus type 2 particles into mosquito saliva. Does not affect dengue virus type 2 replication or infection prevalence in midgut and salivary glands at 14 days after blood feeding. (Microbial infection) Facilitates shedding of Zika virus particles into mosquito saliva. Does not affect Zika virus replication or infection prevalence in midgut and salivary glands at 14 days after blood feeding. The protein is Odorant-binding protein 10 of Aedes aegypti (Yellowfever mosquito).